The primary structure comprises 481 residues: Zinc finger CCCH domain-containing protein 4 (481 aa).

The C3H1-type zinc-finger motif lies at Arg-157–Pro-184. The 74-residue stretch at Lys-228–Pro-301 folds into the RRM domain. A disordered region spans residues His-329–Gln-481. The segment covering Gln-331 to Ala-345 has biased composition (pro residues). 2 stretches are compositionally biased toward low complexity: residues Ala-369–His-389 and Tyr-399–Pro-410. A compositionally biased stretch (pro residues) spans Ala-423–Ser-444. The segment covering Ser-449–Pro-471 has biased composition (low complexity). Polar residues predominate over residues Asp-472–Gln-481.

This Arabidopsis thaliana (Mouse-ear cress) protein is Zinc finger CCCH domain-containing protein 4.